A 906-amino-acid polypeptide reads, in one-letter code: Gamma-tubulin complex component 3 homolog (906 aa).

A compositionally biased stretch (polar residues) spans 208-229 (GQQPSQQSTTTKGLPNTVSRNV). Residues 208-242 (GQQPSQQSTTTKGLPNTVSRNVPRTRREGDSSGSV) form a disordered region.

The protein belongs to the TUBGCP family. As to quaternary structure, interacts with gamma-tubulin.

It localises to the cytoplasm. The protein localises to the cytoskeleton. The protein resides in the microtubule organizing center. Its subcellular location is the centrosome. Functionally, necessary for the recruitment of gamma-tubulin to the centrosome and for the formation of a functional centrosome. This Xenopus laevis (African clawed frog) protein is Gamma-tubulin complex component 3 homolog (tubgcp3).